The primary structure comprises 139 residues: Putative pre-16S rRNA nuclease (139 aa).

It belongs to the YqgF nuclease family.

It is found in the cytoplasm. In terms of biological role, could be a nuclease involved in processing of the 5'-end of pre-16S rRNA. The polypeptide is Putative pre-16S rRNA nuclease (Haemophilus influenzae (strain 86-028NP)).